A 188-amino-acid polypeptide reads, in one-letter code: Methylamine dehydrogenase light chain (188 aa).

Residues 1–57 constitute a signal peptide (tat-type signal); that stretch reads MLGNFRFDDMVEKLSRRVAGRTSRRGAIGRLGTVLAGAALVPLLPVDRRGRVSRANA. 6 cysteine pairs are disulfide-bonded: cysteine 80-cysteine 145, cysteine 86-cysteine 118, cysteine 93-cysteine 178, cysteine 95-cysteine 143, cysteine 103-cysteine 134, and cysteine 135-cysteine 166. Residue tryptophan 114 is modified to Tryptophylquinone. Positions 114–165 form a cross-link, tryptophan tryptophylquinone (Trp-Trp); that stretch reads WVASCYNPTDGQSYLIAYRDCCGYNVSGRCPCLNTEGELPVYRPEFANDIIW.

It belongs to the aromatic amine dehydrogenase light chain family. Heterotetramer of two light and two heavy chains. It depends on tryptophan tryptophylquinone residue as a cofactor. In terms of processing, predicted to be exported by the Tat system. The position of the signal peptide cleavage has been experimentally proven. Post-translationally, tryptophan tryptophylquinone (TTQ) is formed by oxidation of the indole ring of a tryptophan to form tryptophylquinone followed by covalent cross-linking with another tryptophan residue.

The protein resides in the periplasm. The enzyme catalyses 2 oxidized [amicyanin] + methylamine + H2O = 2 reduced [amicyanin] + formaldehyde + NH4(+) + 2 H(+). The protein operates within one-carbon metabolism; methylamine degradation; formaldehyde from methylamine: step 1/1. Functionally, methylamine dehydrogenase carries out the oxidation of methylamine. Electrons are passed from methylamine dehydrogenase to amicyanin. This is Methylamine dehydrogenase light chain (mauA) from Paracoccus versutus (Thiobacillus versutus).